Consider the following 381-residue polypeptide: Guanine nucleotide-binding protein G(olf) subunit alpha (381 aa).

The tract at residues 1–25 (MGCLGGNSKTTEDQGVDEKERREAN) is disordered. Glycine 2 is lipidated: N-palmitoyl glycine. Residue cysteine 3 is the site of S-palmitoyl cysteine attachment. Residues 10–25 (TTEDQGVDEKERREAN) show a composition bias toward basic and acidic residues. Positions 41–381 (ATHRLLLLGA…RMHLKQYELL (341 aa)) constitute a G-alpha domain. Positions 44–57 (RLLLLGAGESGKST) are G1 motif. The GTP site is built by glutamate 52, serine 53, glycine 54, lysine 55, serine 56, and threonine 57. Serine 56 contributes to the Mg(2+) binding site. Threonine 178 carries the post-translational modification Phosphothreonine. The interval 183–191 (DLLRCRVLT) is G2 motif. Residues leucine 185 and arginine 186 each coordinate GTP. An ADP-ribosylarginine; by cholera toxin modification is found at arginine 188. Threonine 191 lines the GTP pocket. Residues threonine 191 and aspartate 210 each contribute to the Mg(2+) site. The interval 206–215 (FHMFDVGGQR) is G3 motif. Positions 213, 279, 280, 282, and 353 each coordinate GTP. Residues 275–282 (ILFLNKQD) form a G4 motif region. The G5 motif stretch occupies residues 351 to 356 (TCAVDT).

It belongs to the G-alpha family. G(s) subfamily. As to quaternary structure, g proteins are composed of 3 units; alpha, beta and gamma. The alpha chain contains the guanine nucleotide binding site. Interacts with GAS2L2. Interacts (GDP-bound form) with RIC8B (via C-terminus); promoting GNAL folding and association with the plasma membrane. Detected in olfactory neuroepithelium, brain, testis, and to a lower extent in retina, lung alveoli, spleen. Trace amounts where seen in kidney, adrenal gland and liver. Found to be expressed in all the insulinomas examined.

It is found in the cell membrane. The enzyme catalyses GTP + H2O = GDP + phosphate + H(+). Functionally, guanine nucleotide-binding protein (G protein) involved as transducer in olfactory signal transduction controlled by G protein-coupled receptors (GPCRs). Contains the guanine nucleotide binding site and alternates between an active, GTP-bound state and an inactive, GDP-bound state. Signaling by an activated GPCR promotes GDP release and GTP binding. The alpha subunit has a low GTPase activity that converts bound GTP to GDP, thereby terminating the signal. Both GDP release and GTP hydrolysis are modulated by numerous regulatory proteins. GNAL/G(olf) alpha specifically mediates olfactory signal transduction within the olfactory neuroepithelium and the basal ganglia following GPCRs activation. Acts by promoting the specific activation of adenylyl cyclase ADCY3, resulting in increased levels of the signaling molecule cAMP. In Homo sapiens (Human), this protein is Guanine nucleotide-binding protein G(olf) subunit alpha.